We begin with the raw amino-acid sequence, 404 residues long: Cytoplasmic 60S subunit biogenesis factor REI1 homolog 1 (404 aa).

C2H2-type zinc fingers lie at residues 4–28 (LTCN…SDWH) and 68–92 (YTCA…SRSH). The interval 119–169 (QHRGSIDDDSEDEWVEVDSDEELAAEEASDSLSKLNVNESGSAEDMDDDGD) is disordered. Composition is skewed to acidic residues over residues 125 to 147 (DDDS…EEAS) and 160 to 169 (SAEDMDDDGD). C2H2-type zinc fingers lie at residues 178–201 (TCCL…HKHH) and 229–256 (FMCL…AKSH).

It belongs to the REI1 family. In terms of assembly, can form homodimer. Interacts with RLP24, RPL24A, RPL24B, EBP1 and JJJ1.

It localises to the cytoplasm. Functionally, pre-60S-associated factor involved in the cytoplasmic maturation of the 60S subunit. Involved in the dissociation and recycling of other late pre-60S factors before newly synthesized large ribosomal subunits enter translation. Can complement the growth defect of a yeast mutant lacking REI1. Required for leaf growth under cold temperature conditions. In Arabidopsis thaliana (Mouse-ear cress), this protein is Cytoplasmic 60S subunit biogenesis factor REI1 homolog 1.